A 150-amino-acid chain; its full sequence is Endoribonuclease YbeY (150 aa).

Residues histidine 113, histidine 117, and histidine 123 each contribute to the Zn(2+) site.

Belongs to the endoribonuclease YbeY family. Requires Zn(2+) as cofactor.

It localises to the cytoplasm. Its function is as follows. Single strand-specific metallo-endoribonuclease involved in late-stage 70S ribosome quality control and in maturation of the 3' terminus of the 16S rRNA. This Syntrophotalea carbinolica (strain DSM 2380 / NBRC 103641 / GraBd1) (Pelobacter carbinolicus) protein is Endoribonuclease YbeY.